We begin with the raw amino-acid sequence, 273 residues long: 4-hydroxy-tetrahydrodipicolinate reductase (273 aa).

NAD(+) is bound by residues 12-17 and E38; that span reads GAGGRM. R39 is a binding site for NADP(+). NAD(+) is bound by residues 102–104 and 126–129; these read GTT and AANF. The active-site Proton donor/acceptor is the H159. H160 serves as a coordination point for (S)-2,3,4,5-tetrahydrodipicolinate. Residue K163 is the Proton donor of the active site. Position 169 to 170 (169 to 170) interacts with (S)-2,3,4,5-tetrahydrodipicolinate; the sequence is GT.

This sequence belongs to the DapB family. Homotetramer.

It is found in the cytoplasm. It catalyses the reaction (S)-2,3,4,5-tetrahydrodipicolinate + NAD(+) + H2O = (2S,4S)-4-hydroxy-2,3,4,5-tetrahydrodipicolinate + NADH + H(+). The catalysed reaction is (S)-2,3,4,5-tetrahydrodipicolinate + NADP(+) + H2O = (2S,4S)-4-hydroxy-2,3,4,5-tetrahydrodipicolinate + NADPH + H(+). The protein operates within amino-acid biosynthesis; L-lysine biosynthesis via DAP pathway; (S)-tetrahydrodipicolinate from L-aspartate: step 4/4. In terms of biological role, catalyzes the conversion of 4-hydroxy-tetrahydrodipicolinate (HTPA) to tetrahydrodipicolinate. In Klebsiella pneumoniae (strain 342), this protein is 4-hydroxy-tetrahydrodipicolinate reductase.